A 258-amino-acid polypeptide reads, in one-letter code: Peroxisomal membrane protein 11B (258 aa).

Residue K43 is modified to N6-acetyllysine. The interval 210–258 is interaction with PEX19, PEX11G and FIS1 and peroxisome targeting; sequence VVRNACDLFIPLDKLGLWRCGPGIVGLCGLVSSILSILTLICPWLRLKP. The helical transmembrane segment at 232–254 threads the bilayer; sequence GIVGLCGLVSSILSILTLICPWL.

Belongs to the peroxin-11 family. As to quaternary structure, homodimer. Heterodimer with PEX11G. Interacts with PEX19. Interacts with FIS1.

It localises to the peroxisome membrane. Its function is as follows. Involved in peroxisomal proliferation. May regulate peroxisome division by recruiting the dynamin-related GTPase DNM1L to the peroxisomal membrane. Promotes membrane protrusion and elongation on the peroxisomal surface. The polypeptide is Peroxisomal membrane protein 11B (PEX11B) (Bos taurus (Bovine)).